Reading from the N-terminus, the 429-residue chain is UDP-N-acetylglucosamine 1-carboxyvinyltransferase 2 (429 aa).

22–23 is a binding site for phosphoenolpyruvate; sequence KN. UDP-N-acetyl-alpha-D-glucosamine is bound at residue Arg-93. The Proton donor role is filled by Cys-117. 2-(S-cysteinyl)pyruvic acid O-phosphothioketal is present on Cys-117. UDP-N-acetyl-alpha-D-glucosamine is bound by residues 122–126, Asp-305, and Ile-327; that span reads RPIDQ.

This sequence belongs to the EPSP synthase family. MurA subfamily.

Its subcellular location is the cytoplasm. It catalyses the reaction phosphoenolpyruvate + UDP-N-acetyl-alpha-D-glucosamine = UDP-N-acetyl-3-O-(1-carboxyvinyl)-alpha-D-glucosamine + phosphate. It participates in cell wall biogenesis; peptidoglycan biosynthesis. Its function is as follows. Cell wall formation. Adds enolpyruvyl to UDP-N-acetylglucosamine. The sequence is that of UDP-N-acetylglucosamine 1-carboxyvinyltransferase 2 from Bacillus anthracis.